The primary structure comprises 108 residues: MKKNTHPEYRQVLFVDSSTGYKFVCGSTYQTDKTEVFEGQEYPVCYVSISSSSHPFFTGSKKLVDAEGRVDKFLKRYSGIKQSAPKPETVVEDVLPKGKKKSPAKKKK.

The segment at 86–108 (KPETVVEDVLPKGKKKSPAKKKK) is disordered. A compositionally biased stretch (basic residues) spans 97–108 (KGKKKSPAKKKK).

This sequence belongs to the bacterial ribosomal protein bL31 family. Type B subfamily. Part of the 50S ribosomal subunit.

In Chlamydia trachomatis serovar L2 (strain ATCC VR-902B / DSM 19102 / 434/Bu), this protein is Large ribosomal subunit protein bL31B.